The primary structure comprises 351 residues: MVEPYSQKEQVQQVVYRILDANLDRAREGLRIIEEWCRFGLNNAQLALECKRLRQELAKWHTPELRAARDTPGDPGTELTHPQEEERASIKSVLQANFCRVEEALRVLEEYSKLYQPNIAKACKQMRYQVYTLESNLMGHQRHQLLWRSRLYLVTSPSENLLNNVEAALKGGLTLLQYRDKTADDSLRLEQARKLRQLCHIYGALFIVNDRVDLALAVDADGVHLGQQDMPIAIARQLLGSQRLIGLSTTNKEEMQAAIAEGVDYIGVGPVYETPTKVGKAATGLEYVSYAAKNCSIPWFAIGGIDANNINDAIDAGAKRVAVVRSLMQAEQPTLVTQYLLSQLNRIKPEL.

The unknown stretch occupies residues 1–129 (MVEPYSQKEQ…AKACKQMRYQ (129 aa)). The interval 65-85 (LRAARDTPGDPGTELTHPQEE) is disordered. The thiamine-phosphate synthase stretch occupies residues 130 to 351 (VYTLESNLMG…SQLNRIKPEL (222 aa)). 4-amino-2-methyl-5-(diphosphooxymethyl)pyrimidine is bound by residues 177-181 (QYRDK) and N209. Mg(2+) is bound by residues D210 and D229. S248 is a binding site for 4-amino-2-methyl-5-(diphosphooxymethyl)pyrimidine. Residue 274–276 (TPT) coordinates 2-[(2R,5Z)-2-carboxy-4-methylthiazol-5(2H)-ylidene]ethyl phosphate. K277 contributes to the 4-amino-2-methyl-5-(diphosphooxymethyl)pyrimidine binding site. G304 provides a ligand contact to 2-[(2R,5Z)-2-carboxy-4-methylthiazol-5(2H)-ylidene]ethyl phosphate.

Belongs to the thiamine-phosphate synthase family. Requires Mg(2+) as cofactor.

It catalyses the reaction 2-[(2R,5Z)-2-carboxy-4-methylthiazol-5(2H)-ylidene]ethyl phosphate + 4-amino-2-methyl-5-(diphosphooxymethyl)pyrimidine + 2 H(+) = thiamine phosphate + CO2 + diphosphate. The catalysed reaction is 2-(2-carboxy-4-methylthiazol-5-yl)ethyl phosphate + 4-amino-2-methyl-5-(diphosphooxymethyl)pyrimidine + 2 H(+) = thiamine phosphate + CO2 + diphosphate. The enzyme catalyses 4-methyl-5-(2-phosphooxyethyl)-thiazole + 4-amino-2-methyl-5-(diphosphooxymethyl)pyrimidine + H(+) = thiamine phosphate + diphosphate. It functions in the pathway cofactor biosynthesis; thiamine diphosphate biosynthesis; thiamine phosphate from 4-amino-2-methyl-5-diphosphomethylpyrimidine and 4-methyl-5-(2-phosphoethyl)-thiazole: step 1/1. Condenses 4-methyl-5-(beta-hydroxyethyl)thiazole monophosphate (THZ-P) and 2-methyl-4-amino-5-hydroxymethyl pyrimidine pyrophosphate (HMP-PP) to form thiamine monophosphate (TMP). The chain is Thiamine-phosphate synthase from Nostoc punctiforme (strain ATCC 29133 / PCC 73102).